The sequence spans 204 residues: Synaptosomal-associated protein 25-A (204 aa).

Residues 1–11 show a composition bias toward basic and acidic residues; it reads MAEDSDMRNEL. The disordered stretch occupies residues 1–25; that stretch reads MAEDSDMRNELADMQQRADQLADES. T-SNARE coiled-coil homology domains are found at residues 19 to 81 and 138 to 200; these read DQLA…LNDL and DARE…ATKM.

This sequence belongs to the SNAP-25 family. In terms of tissue distribution, expressed in several regions throughout the adult brain, including the mesencephalon.

The protein resides in the synapse. The protein localises to the synaptosome. It localises to the cell membrane. May play an important role in the synaptic function of specific neuronal systems. Associates with proteins involved in vesicle docking and membrane fusion. This chain is Synaptosomal-associated protein 25-A, found in Danio rerio (Zebrafish).